We begin with the raw amino-acid sequence, 368 residues long: Endophilin-A2 (368 aa).

The tract at residues 1-21 (MSVAGLKKQFYKASQLVSEKV) is membrane-binding amphipathic helix. Residues 18–249 (SEKVGGAEGT…LKRRVREASS (232 aa)) form the BAR domain. The segment at 60 to 87 (PNPASRAKLTMLNTVSKIRGQVKNPGYP) is required for dimerization upon membrane association. The stretch at 180 to 250 (DEELRQALEK…KRRVREASSR (71 aa)) forms a coiled coil. The interaction with ARC stretch occupies residues 218-254 (LVDAQLDYHRQAVQILEELADKLKRRVREASSRPKRE). The interval 244 to 307 (VREASSRPKR…MPSKSMPPLD (64 aa)) is disordered. Residues 245–263 (REASSRPKREFKPRPREPF) show a composition bias toward basic and acidic residues. Residues Ser-288 and Ser-292 each carry the phosphoserine modification. An SH3 domain is found at 306-365 (LDQPSCKALYDFEPENDGELGFREGDLITLTNQIDENWYEGMLHGQSGFFPLSYVQVLVP). Tyr-315 is subject to Phosphotyrosine.

The protein belongs to the endophilin family. In terms of assembly, interacts with ARC, SYNJ1 and DNM1. Interacts with PDCD6IP. Interacts with BIN2.

Its subcellular location is the cytoplasm. It localises to the early endosome membrane. It is found in the cell projection. The protein localises to the podosome. Implicated in endocytosis. May recruit other proteins to membranes with high curvature. This Mus musculus (Mouse) protein is Endophilin-A2 (Sh3gl1).